We begin with the raw amino-acid sequence, 458 residues long: F-box/FBD/LRR-repeat protein At1g78750 (458 aa).

In terms of domain architecture, F-box spans 17–67 (VDWISNLPETLLCQVLFYLPTKDVVKSSVLSSRWRNLWKYVPGFNLSYCDF). LRR repeat units lie at residues 152 to 183 (CETL…HLSI), 184 to 209 (VKFA…NINR), 231 to 258 (VADT…RLSD), 302 to 327 (DFLV…YDYS), and 345 to 370 (FYGY…VVGS). Residues 376-428 (KEGINILSVPRGFLSSLEYVKIERPLKGEAMEMKLVSYLLENSTILKKLTLCL) form the FBD domain.

The polypeptide is F-box/FBD/LRR-repeat protein At1g78750 (Arabidopsis thaliana (Mouse-ear cress)).